A 300-amino-acid chain; its full sequence is Ribonuclease Z (300 aa).

Zn(2+) contacts are provided by histidine 63, histidine 65, aspartate 67, histidine 68, histidine 140, aspartate 207, and histidine 265. The Proton acceptor role is filled by aspartate 67.

This sequence belongs to the RNase Z family. Homodimer. It depends on Zn(2+) as a cofactor.

The enzyme catalyses Endonucleolytic cleavage of RNA, removing extra 3' nucleotides from tRNA precursor, generating 3' termini of tRNAs. A 3'-hydroxy group is left at the tRNA terminus and a 5'-phosphoryl group is left at the trailer molecule.. Zinc phosphodiesterase, which displays some tRNA 3'-processing endonuclease activity. Probably involved in tRNA maturation, by removing a 3'-trailer from precursor tRNA. The chain is Ribonuclease Z from Ignicoccus hospitalis (strain KIN4/I / DSM 18386 / JCM 14125).